The sequence spans 237 residues: Myb-related protein MYBAS1 (237 aa).

2 consecutive HTH myb-type domains span residues Arg-5–Leu-57 and His-58–Ala-112. Residues Trp-33–Leu-57 constitute a DNA-binding region (H-T-H motif). The Bipartite nuclear localization signal 1 signature appears at Lys-62–Arg-65. A DNA-binding region (H-T-H motif) is located at residues Trp-85 to Met-108. The Bipartite nuclear localization signal 2 signature appears at Arg-109 to Gly-117.

The protein resides in the nucleus. In terms of biological role, transcription factor. The chain is Myb-related protein MYBAS1 (MYBAS1) from Oryza sativa subsp. japonica (Rice).